Consider the following 93-residue polypeptide: Aspartyl/glutamyl-tRNA(Asn/Gln) amidotransferase subunit C (93 aa).

This sequence belongs to the GatC family. As to quaternary structure, heterotrimer of A, B and C subunits.

The enzyme catalyses L-glutamyl-tRNA(Gln) + L-glutamine + ATP + H2O = L-glutaminyl-tRNA(Gln) + L-glutamate + ADP + phosphate + H(+). The catalysed reaction is L-aspartyl-tRNA(Asn) + L-glutamine + ATP + H2O = L-asparaginyl-tRNA(Asn) + L-glutamate + ADP + phosphate + 2 H(+). In terms of biological role, allows the formation of correctly charged Asn-tRNA(Asn) or Gln-tRNA(Gln) through the transamidation of misacylated Asp-tRNA(Asn) or Glu-tRNA(Gln) in organisms which lack either or both of asparaginyl-tRNA or glutaminyl-tRNA synthetases. The reaction takes place in the presence of glutamine and ATP through an activated phospho-Asp-tRNA(Asn) or phospho-Glu-tRNA(Gln). This is Aspartyl/glutamyl-tRNA(Asn/Gln) amidotransferase subunit C from Helicobacter pylori (strain HPAG1).